The sequence spans 243 residues: Small ribosomal subunit protein uS5 (243 aa).

Residues 1 to 10 (MSDNETKETQ) show a composition bias toward basic and acidic residues. The disordered stretch occupies residues 1–50 (MSDNETKETQVAEETQNTVATESNNEDRKGRRGQRGEGRRGERRNRREEN). Polar residues predominate over residues 12–23 (AEETQNTVATES). The segment covering 25–50 (NEDRKGRRGQRGEGRRGERRNRREEN) has biased composition (basic and acidic residues). The S5 DRBM domain maps to 55–118 (LLDRVVTINR…LDAKKHMFSV (64 aa)).

It belongs to the universal ribosomal protein uS5 family. As to quaternary structure, part of the 30S ribosomal subunit. Contacts proteins S4 and S8.

With S4 and S12 plays an important role in translational accuracy. Functionally, located at the back of the 30S subunit body where it stabilizes the conformation of the head with respect to the body. This is Small ribosomal subunit protein uS5 from Bifidobacterium longum (strain DJO10A).